The following is a 380-amino-acid chain: Glucose ABC transporter permease protein TsgB13 (380 aa).

Transmembrane regions (helical) follow at residues 20–40, 59–81, 94–114, 115–135, 148–166, 202–222, 255–275, 282–301, 305–325, and 328–348; these read GTPVLTVLAALAVGGVALVAL, QFGLTEVLVRAVPLILAGLAVYL, GQLLLGALAGTWVAVNVSLPA, VALLPLMFLAACVAGAFWAGI, IITSLLLTFVAQELQSYLL, IPLFADVHAGLLVAVAAVVAT, VYLFVFLLGGAFAALGGIAEI, FRAAFAPGYGFTAIPIALLG, AVKVTLAGLFFAVLFVGGSSV, and AFGVPAALVEIIQALVILFLI.

The protein belongs to the binding-protein-dependent transport system permease family. In terms of assembly, the complex is composed of two ATP-binding proteins (TsgD13), two transmembrane proteins (TsgB13 and TsgC13) and a solute-binding protein (TsgA13).

It is found in the cell membrane. Its function is as follows. Part of an ABC transporter complex involved in glucose import. Responsible for the translocation of the substrate across the membrane. The sequence is that of Glucose ABC transporter permease protein TsgB13 (tsgB13) from Haloferax volcanii (strain ATCC 29605 / DSM 3757 / JCM 8879 / NBRC 14742 / NCIMB 2012 / VKM B-1768 / DS2) (Halobacterium volcanii).